We begin with the raw amino-acid sequence, 106 residues long: uncharacterized protein (106 aa).

Residues 1–22 (MKKHPNLLLGFSVYLSAGTKLT) form the signal peptide. Residues 23–46 (IPPEAEQHTAPSDNNKRKRAKCDD) form a disordered region.

This is an uncharacterized protein from Arabidopsis thaliana (Mouse-ear cress).